A 326-amino-acid polypeptide reads, in one-letter code: ATP synthase gamma chain (326 aa).

Belongs to the ATPase gamma chain family. As to quaternary structure, F-type ATPases have 2 components, CF(1) - the catalytic core - and CF(0) - the membrane proton channel. CF(1) has five subunits: alpha(3), beta(3), gamma(1), delta(1), epsilon(1). CF(0) has three main subunits: a, b and c.

It localises to the cell membrane. In terms of biological role, produces ATP from ADP in the presence of a proton gradient across the membrane. The gamma chain is believed to be important in regulating ATPase activity and the flow of protons through the CF(0) complex. The chain is ATP synthase gamma chain from Corynebacterium jeikeium (strain K411).